Here is a 128-residue protein sequence, read N- to C-terminus: Aspartate 1-decarboxylase (128 aa).

S25 acts as the Schiff-base intermediate with substrate; via pyruvic acid in catalysis. Residue S25 is modified to Pyruvic acid (Ser). T57 is a substrate binding site. Y58 functions as the Proton donor in the catalytic mechanism. 73–75 (GAA) contacts substrate.

It belongs to the PanD family. As to quaternary structure, heterooctamer of four alpha and four beta subunits. It depends on pyruvate as a cofactor. Post-translationally, is synthesized initially as an inactive proenzyme, which is activated by self-cleavage at a specific serine bond to produce a beta-subunit with a hydroxyl group at its C-terminus and an alpha-subunit with a pyruvoyl group at its N-terminus.

Its subcellular location is the cytoplasm. It carries out the reaction L-aspartate + H(+) = beta-alanine + CO2. It participates in cofactor biosynthesis; (R)-pantothenate biosynthesis; beta-alanine from L-aspartate: step 1/1. Catalyzes the pyruvoyl-dependent decarboxylation of aspartate to produce beta-alanine. This is Aspartate 1-decarboxylase from Chlorobaculum parvum (strain DSM 263 / NCIMB 8327) (Chlorobium vibrioforme subsp. thiosulfatophilum).